The following is a 309-amino-acid chain: Porphobilinogen deaminase (309 aa).

Cysteine 241 is modified (S-(dipyrrolylmethanemethyl)cysteine).

It belongs to the HMBS family. As to quaternary structure, monomer. The cofactor is dipyrromethane.

It catalyses the reaction 4 porphobilinogen + H2O = hydroxymethylbilane + 4 NH4(+). Its pathway is porphyrin-containing compound metabolism; protoporphyrin-IX biosynthesis; coproporphyrinogen-III from 5-aminolevulinate: step 2/4. Its function is as follows. Tetrapolymerization of the monopyrrole PBG into the hydroxymethylbilane pre-uroporphyrinogen in several discrete steps. The polypeptide is Porphobilinogen deaminase (Bacillus cereus (strain ATCC 10987 / NRS 248)).